We begin with the raw amino-acid sequence, 412 residues long: Palmitoyltransferase ZDHHC11 (412 aa).

The Cytoplasmic portion of the chain corresponds to Met-1–Gln-42. A helical membrane pass occupies residues Val-43–Phe-63. The Lumenal segment spans residues Leu-64–Lys-69. The helical transmembrane segment at Tyr-70 to Ala-90 threads the bilayer. Residues Ser-91–Ser-176 lie on the Cytoplasmic side of the membrane. The 51-residue stretch at Gln-125–Ala-175 folds into the DHHC domain. Cys-155 functions as the S-palmitoyl cysteine intermediate in the catalytic mechanism. The chain crosses the membrane as a helical span at residues Ala-177–Val-197. The Lumenal segment spans residues Asn-198–Thr-230. The segment at Asn-198 to Asp-412 is mediates interaction with IRF3 and STING1. Residues Leu-231–Leu-251 traverse the membrane as a helical segment. Topologically, residues Gly-252–Asp-412 are cytoplasmic. Positions His-374–Asp-412 are disordered. The span at Ser-389–Thr-400 shows a compositional bias: polar residues. A compositionally biased stretch (basic and acidic residues) spans Glu-401–Asp-412.

The protein belongs to the DHHC palmitoyltransferase family. In terms of assembly, interacts with IRF3 and STING1; in presence of DNA viruses recruits IRF3 to STING1 promoting IRF3 phosphorylation and activation. In terms of tissue distribution, expressed in testis.

It is found in the endoplasmic reticulum membrane. It catalyses the reaction L-cysteinyl-[protein] + hexadecanoyl-CoA = S-hexadecanoyl-L-cysteinyl-[protein] + CoA. Endoplasmic reticulum-localized palmitoyltransferase that could catalyze the addition of palmitate onto various protein substrates and be involved in a variety of cellular processes. Has a palmitoyltransferase activity toward NCDN and regulates NCDN association with endosome membranes through this palmitoylation. May play a role in cell proliferation. In terms of biological role, also has a palmitoyltransferase activity-independent function in DNA virus-triggered and CGAS-mediated innate immune response. Functions as an adapter that recruits IRF3 to STING1 to promote the activation of that key transcriptional regulator of type I interferon (IFN)-dependent immune response. In Homo sapiens (Human), this protein is Palmitoyltransferase ZDHHC11.